The following is a 470-amino-acid chain: GTPase Der (470 aa).

EngA-type G domains are found at residues 32-195 and 206-379; these read PVVA…PTIS and RRVA…KSWD. Residues 38-45, 85-89, 147-150, 212-219, 259-263, and 324-327 each bind GTP; these read GRPNVGKS, DTGGW, NKVD, GKPNVGKS, DTAGL, and NKWD. The 83-residue stretch at 380-462 folds into the KH-like domain; the sequence is TRVSTGRLNT…PIRINVRVRE (83 aa).

Belongs to the TRAFAC class TrmE-Era-EngA-EngB-Septin-like GTPase superfamily. EngA (Der) GTPase family. In terms of assembly, associates with the 50S ribosomal subunit.

In terms of biological role, GTPase that plays an essential role in the late steps of ribosome biogenesis. The polypeptide is GTPase Der (Mycolicibacterium vanbaalenii (strain DSM 7251 / JCM 13017 / BCRC 16820 / KCTC 9966 / NRRL B-24157 / PYR-1) (Mycobacterium vanbaalenii)).